Consider the following 287-residue polypeptide: Large ribosomal subunit protein uL2 (287 aa).

The interval 221-287 (RGSVMNPCDH…SKRSRGGRDS (67 aa)) is disordered. Over residues 258–287 (KTRKRNKPSNKFVLRKRRKTSKRSRGGRDS) the composition is skewed to basic residues.

The protein belongs to the universal ribosomal protein uL2 family. As to quaternary structure, part of the 50S ribosomal subunit. Forms a bridge to the 30S subunit in the 70S ribosome.

In terms of biological role, one of the primary rRNA binding proteins. Required for association of the 30S and 50S subunits to form the 70S ribosome, for tRNA binding and peptide bond formation. It has been suggested to have peptidyltransferase activity; this is somewhat controversial. Makes several contacts with the 16S rRNA in the 70S ribosome. This is Large ribosomal subunit protein uL2 from Synechococcus sp. (strain WH7803).